Here is a 375-residue protein sequence, read N- to C-terminus: Beta sliding clamp (375 aa).

It belongs to the beta sliding clamp family. As to quaternary structure, forms a ring-shaped head-to-tail homodimer around DNA which binds and tethers DNA polymerases and other proteins to the DNA. The DNA replisome complex has a single clamp-loading complex (3 tau and 1 each of delta, delta', psi and chi subunits) which binds 3 Pol III cores (1 core on the leading strand and 2 on the lagging strand) each with a beta sliding clamp dimer. Additional proteins in the replisome are other copies of gamma, psi and chi, Ssb, DNA helicase and RNA primase.

It localises to the cytoplasm. Functionally, confers DNA tethering and processivity to DNA polymerases and other proteins. Acts as a clamp, forming a ring around DNA (a reaction catalyzed by the clamp-loading complex) which diffuses in an ATP-independent manner freely and bidirectionally along dsDNA. Initially characterized for its ability to contact the catalytic subunit of DNA polymerase III (Pol III), a complex, multichain enzyme responsible for most of the replicative synthesis in bacteria; Pol III exhibits 3'-5' exonuclease proofreading activity. The beta chain is required for initiation of replication as well as for processivity of DNA replication. In Mycoplasma capricolum subsp. capricolum (strain California kid / ATCC 27343 / NCTC 10154), this protein is Beta sliding clamp (dnaN).